Reading from the N-terminus, the 418-residue chain is Beta-arrestin-1 (418 aa).

The segment at 1–163 (MGDKGTRVFK…LEEKIHKRNS (163 aa)) is interaction with SRC. Positions 45-86 (PEYLKERRVYVTLTCAFRYGREDLDVLGLTFRKDLFVANVQS) are interaction with CHRM2. Y47 carries the phosphotyrosine modification. The 1D-myo-inositol hexakisphosphate site is built by K250, M255, K324, and K326. Residues 318–418 (IVSYKVKVKL…GTGSPHLNNR (101 aa)) are interaction with TRAF6. 2 disordered regions span residues 353-375 (HPKP…VDTN) and 397-418 (KGMK…LNNR). Positions 355–366 (KPKEEPPHREVP) are enriched in basic and acidic residues. Phosphoserine is present on S412.

The protein belongs to the arrestin family. Monomer. Homodimer. Homooligomer; the self-association is mediated by InsP6-binding. Heterooligomer with ARRB2; the association is mediated by InsP6-binding. Interacts with ADRB2 (phosphorylated). Interacts with CHRM2 (phosphorylated). Interacts with LHCGR. Interacts with CYTH2 and CASR. Interacts with AP2B1 (dephosphorylated); phosphorylation of AP2B1 disrupts the interaction. Interacts (dephosphorylated at Ser-412) with CLTC. Interacts with CCR2 and GRK2. Interacts with CRR5. Interacts with PTAFR (phosphorylated on serine residues). Interacts with CLTC and MAP2K3. Interacts with CREB1. Interacts with TRAF6. Interacts with IGF1R and MDM2. Interacts with C5AR1. Interacts with PDE4D. Interacts with SRC (via the SH3 domain and the protein kinase domain); the interaction is independent of the phosphorylation state of SRC C-terminus. Interacts with TACR1. Interacts with RAF1. Interacts with DVL1; the interaction is enhanced by phosphorylation of DVL1. Interacts with DVL2; the interaction is enhanced by phosphorylation of DVL2. Interacts with IGF1R. Interacts with CHUK, IKBKB and MAP3K14. Associates with MAP kinase p38. Part of a MAPK signaling complex consisting of TACR1, ARRB1, SRC, MAPK1 (activated) and MAPK3 (activated). Part of a MAPK signaling complex consisting of F2RL1, ARRB1, RAF1, MAPK1 (activated) and MAPK3 (activated). Interacts with GPR143. Interacts with MAP2K4/MKK4. Interacts with HCK and CXCR1 (phosphorylated). Interacts with ACKR3 and ACKR4. Interacts with ARRDC1; the interaction is direct. Interacts with GPR61, GPR62 and GPR135. Post-translationally, constitutively phosphorylated at in the cytoplasm. At the plasma membrane, is rapidly dephosphorylated, a process that is required for clathrin binding and ADRB2 endocytosis but not for ADRB2 binding and desensitization. Once internalized, is rephosphorylated. In terms of processing, the ubiquitination status appears to regulate the formation and trafficking of beta-arrestin-GPCR complexes and signaling. Ubiquitination appears to occur GPCR-specific. Ubiquitinated by MDM2; the ubiquitination is required for rapid internalization of ADRB2. Deubiquitinated by USP33; the deubiquitination leads to a dissociation of the beta-arrestin-GPCR complex. Stimulation of a class A GPCR, such as ADRB2, induces transient ubiquitination and subsequently promotes association with USP33.

It is found in the cytoplasm. The protein localises to the nucleus. The protein resides in the cell membrane. It localises to the membrane. Its subcellular location is the clathrin-coated pit. It is found in the cell projection. The protein localises to the pseudopodium. The protein resides in the cytoplasmic vesicle. Its function is as follows. Functions in regulating agonist-mediated G-protein coupled receptor (GPCR) signaling by mediating both receptor desensitization and resensitization processes. During homologous desensitization, beta-arrestins bind to the GPRK-phosphorylated receptor and sterically preclude its coupling to the cognate G-protein; the binding appears to require additional receptor determinants exposed only in the active receptor conformation. The beta-arrestins target many receptors for internalization by acting as endocytic adapters (CLASPs, clathrin-associated sorting proteins) and recruiting the GPRCs to the adapter protein 2 complex 2 (AP-2) in clathrin-coated pits (CCPs). However, the extent of beta-arrestin involvement appears to vary significantly depending on the receptor, agonist and cell type. Internalized arrestin-receptor complexes traffic to intracellular endosomes, where they remain uncoupled from G-proteins. Two different modes of arrestin-mediated internalization occur. Class A receptors, like ADRB2, OPRM1, ENDRA, D1AR and ADRA1B dissociate from beta-arrestin at or near the plasma membrane and undergo rapid recycling. Class B receptors, like AVPR2, AGTR1, NTSR1, TRHR and TACR1 internalize as a complex with arrestin and traffic with it to endosomal vesicles, presumably as desensitized receptors, for extended periods of time. Receptor resensitization then requires that receptor-bound arrestin is removed so that the receptor can be dephosphorylated and returned to the plasma membrane. Involved in internalization of P2RY4 and UTP-stimulated internalization of P2RY2. Involved in phosphorylation-dependent internalization of OPRD1 ands subsequent recycling. Involved in the degradation of cAMP by recruiting cAMP phosphodiesterases to ligand-activated receptors. Beta-arrestins function as multivalent adapter proteins that can switch the GPCR from a G-protein signaling mode that transmits short-lived signals from the plasma membrane via small molecule second messengers and ion channels to a beta-arrestin signaling mode that transmits a distinct set of signals that are initiated as the receptor internalizes and transits the intracellular compartment. Acts as a signaling scaffold for MAPK pathways such as MAPK1/3 (ERK1/2). ERK1/2 activated by the beta-arrestin scaffold is largely excluded from the nucleus and confined to cytoplasmic locations such as endocytic vesicles, also called beta-arrestin signalosomes. Recruits c-Src/SRC to ADRB2 resulting in ERK activation. GPCRs for which the beta-arrestin-mediated signaling relies on both ARRB1 and ARRB2 (codependent regulation) include ADRB2, F2RL1 and PTH1R. For some GPCRs the beta-arrestin-mediated signaling relies on either ARRB1 or ARRB2 and is inhibited by the other respective beta-arrestin form (reciprocal regulation). Inhibits ERK1/2 signaling in AGTR1- and AVPR2-mediated activation (reciprocal regulation). Is required for SP-stimulated endocytosis of NK1R and recruits c-Src/SRC to internalized NK1R resulting in ERK1/2 activation, which is required for the antiapoptotic effects of SP. Is involved in proteinase-activated F2RL1-mediated ERK activity. Acts as a signaling scaffold for the AKT1 pathway. Is involved in alpha-thrombin-stimulated AKT1 signaling. Is involved in IGF1-stimulated AKT1 signaling leading to increased protection from apoptosis. Involved in activation of the p38 MAPK signaling pathway and in actin bundle formation. Involved in F2RL1-mediated cytoskeletal rearrangement and chemotaxis. Involved in AGTR1-mediated stress fiber formation by acting together with GNAQ to activate RHOA. Appears to function as signaling scaffold involved in regulation of MIP-1-beta-stimulated CCR5-dependent chemotaxis. Involved in attenuation of NF-kappa-B-dependent transcription in response to GPCR or cytokine stimulation by interacting with and stabilizing CHUK. May serve as nuclear messenger for GPCRs. Involved in OPRD1-stimulated transcriptional regulation by translocating to CDKN1B and FOS promoter regions and recruiting EP300 resulting in acetylation of histone H4. Involved in regulation of LEF1 transcriptional activity via interaction with DVL1 and/or DVL2 Also involved in regulation of receptors other than GPCRs. Involved in Toll-like receptor and IL-1 receptor signaling through the interaction with TRAF6 which prevents TRAF6 autoubiquitination and oligomerization required for activation of NF-kappa-B and JUN. Involved in IL8-mediated granule release in neutrophils. Binds phosphoinositides. Binds inositolhexakisphosphate (InsP6). Required for atypical chemokine receptor ACKR2-induced RAC1-LIMK1-PAK1-dependent phosphorylation of cofilin (CFL1) and for the up-regulation of ACKR2 from endosomal compartment to cell membrane, increasing its efficiency in chemokine uptake and degradation. Involved in the internalization of the atypical chemokine receptor ACKR3. Negatively regulates the NOTCH signaling pathway by mediating the ubiquitination and degradation of NOTCH1 by ITCH. Participates in the recruitment of the ubiquitin-protein ligase to the receptor. In Mus musculus (Mouse), this protein is Beta-arrestin-1 (Arrb1).